The sequence spans 304 residues: tRNA dimethylallyltransferase (304 aa).

8–15 lines the ATP pocket; the sequence is GPTASGKS. 10–15 contacts substrate; sequence TASGKS. Residues 33–36 form an interaction with substrate tRNA region; sequence DSRQ.

Belongs to the IPP transferase family. In terms of assembly, monomer. Mg(2+) serves as cofactor.

The enzyme catalyses adenosine(37) in tRNA + dimethylallyl diphosphate = N(6)-dimethylallyladenosine(37) in tRNA + diphosphate. Its function is as follows. Catalyzes the transfer of a dimethylallyl group onto the adenine at position 37 in tRNAs that read codons beginning with uridine, leading to the formation of N6-(dimethylallyl)adenosine (i(6)A). The polypeptide is tRNA dimethylallyltransferase (Chlorobium luteolum (strain DSM 273 / BCRC 81028 / 2530) (Pelodictyon luteolum)).